Consider the following 290-residue polypeptide: Protease HtpX (290 aa).

The next 2 membrane-spanning stretches (helical) occupy residues 6–26 and 36–56; these read LFLV…NILF and ISGL…ISLL. His143 is a binding site for Zn(2+). Residue Glu144 is part of the active site. His147 provides a ligand contact to Zn(2+). 2 helical membrane passes run 158-178 and 200-220; these read LIQG…AGVI and ITVF…VMWF. Residue Glu225 participates in Zn(2+) binding.

Belongs to the peptidase M48B family. The cofactor is Zn(2+).

The protein resides in the cell inner membrane. The protein is Protease HtpX of Aeromonas salmonicida (strain A449).